The primary structure comprises 380 residues: Putative 8-amino-7-oxononanoate synthase (380 aa).

Arg-22 is a binding site for substrate. 109-110 (GY) contributes to the pyridoxal 5'-phosphate binding site. His-134 lines the substrate pocket. Pyridoxal 5'-phosphate is bound by residues Ser-182, 207–210 (DEAH), and 238–241 (TLSK). Residue Lys-241 is modified to N6-(pyridoxal phosphate)lysine. Thr-353 is a binding site for substrate.

Belongs to the class-II pyridoxal-phosphate-dependent aminotransferase family. BioF subfamily. In terms of assembly, homodimer. Pyridoxal 5'-phosphate is required as a cofactor.

It carries out the reaction 6-carboxyhexanoyl-[ACP] + L-alanine + H(+) = (8S)-8-amino-7-oxononanoate + holo-[ACP] + CO2. It functions in the pathway cofactor biosynthesis; biotin biosynthesis. Catalyzes the decarboxylative condensation of pimeloyl-[acyl-carrier protein] and L-alanine to produce 8-amino-7-oxononanoate (AON), [acyl-carrier protein], and carbon dioxide. This is Putative 8-amino-7-oxononanoate synthase (bioF) from Gloeothece citriformis (strain PCC 7424) (Cyanothece sp. (strain PCC 7424)).